Here is a 1204-residue protein sequence, read N- to C-terminus: ATP-dependent helicase/nuclease subunit A (1204 aa).

The UvrD-like helicase ATP-binding domain occupies 2-469 (TKFTKEQNQA…IVLSDNFRST (468 aa)). Residue 23 to 30 (ASAGSGKT) coordinates ATP. Residues 496 to 784 (EGQLQFGATY…KLMTIHASKG (289 aa)) form the UvrD-like helicase C-terminal domain.

It belongs to the helicase family. AddA subfamily. In terms of assembly, heterodimer of AddA and AddB/RexB. It depends on Mg(2+) as a cofactor.

The catalysed reaction is Couples ATP hydrolysis with the unwinding of duplex DNA by translocating in the 3'-5' direction.. It carries out the reaction ATP + H2O = ADP + phosphate + H(+). In terms of biological role, the heterodimer acts as both an ATP-dependent DNA helicase and an ATP-dependent, dual-direction single-stranded exonuclease. Recognizes the chi site generating a DNA molecule suitable for the initiation of homologous recombination. The AddA nuclease domain is required for chi fragment generation; this subunit has the helicase and 3' -&gt; 5' nuclease activities. The polypeptide is ATP-dependent helicase/nuclease subunit A (Lactobacillus johnsonii (strain CNCM I-12250 / La1 / NCC 533)).